The chain runs to 361 residues: Phosphate acyltransferase (361 aa).

Residues 340–361 (VPADGAATEQGPTPRRIAPPRT) are disordered.

The protein belongs to the PlsX family. Homodimer. Probably interacts with PlsY.

Its subcellular location is the cytoplasm. It catalyses the reaction a fatty acyl-[ACP] + phosphate = an acyl phosphate + holo-[ACP]. The protein operates within lipid metabolism; phospholipid metabolism. In terms of biological role, catalyzes the reversible formation of acyl-phosphate (acyl-PO(4)) from acyl-[acyl-carrier-protein] (acyl-ACP). This enzyme utilizes acyl-ACP as fatty acyl donor, but not acyl-CoA. This is Phosphate acyltransferase from Anaeromyxobacter dehalogenans (strain 2CP-1 / ATCC BAA-258).